Consider the following 256-residue polypeptide: Gamma carbonic anhydrase-like 2, mitochondrial (256 aa).

The transit peptide at 1 to 33 directs the protein to the mitochondrion; sequence MATSLARISKRSITSAVSSNLIRRYFAAEAVAV. Substrate is bound by residues 103 to 105 and 118 to 119; these read RGD and QE. Zn(2+) is bound at residue His-124. Positions 152, 164, and 231 each coordinate substrate.

Belongs to the gamma-class carbonic anhydrase family. In terms of assembly, component of the mitochondrial oxidoreductase respiratory chain complex I; element of the extra matrix-exposed domain, which is attached to the membrane arm of this complex. Interacts with GAMMACA2.

It localises to the mitochondrion membrane. Functionally, involved in complex I assembly in mitochondria and respiration. This is Gamma carbonic anhydrase-like 2, mitochondrial (GAMMACAL2) from Arabidopsis thaliana (Mouse-ear cress).